The primary structure comprises 123 residues: MPTNNQLVRCGRKSKIRASKSPALNGNPFAKGVCVLVKTITPRKPNSALRKMARVRFRNGTCVNAYIPGEGHNLQEHSTVLVRGGRVPDLPGVRYHIVRGVYDTQGVKNRKQGRSRYGTKRPK.

A 3-methylthioaspartic acid modification is found at Asp-89.

Belongs to the universal ribosomal protein uS12 family. As to quaternary structure, part of the 30S ribosomal subunit. Contacts proteins S8 and S17. May interact with IF1 in the 30S initiation complex.

Functionally, with S4 and S5 plays an important role in translational accuracy. Interacts with and stabilizes bases of the 16S rRNA that are involved in tRNA selection in the A site and with the mRNA backbone. Located at the interface of the 30S and 50S subunits, it traverses the body of the 30S subunit contacting proteins on the other side and probably holding the rRNA structure together. The combined cluster of proteins S8, S12 and S17 appears to hold together the shoulder and platform of the 30S subunit. The protein is Small ribosomal subunit protein uS12 of Orientia tsutsugamushi (strain Boryong) (Rickettsia tsutsugamushi).